A 235-amino-acid chain; its full sequence is 6-carboxyhexanoate--CoA ligase (235 aa).

The protein belongs to the BioW family. Homodimer. It depends on Mg(2+) as a cofactor.

It catalyses the reaction heptanedioate + ATP + CoA = 6-carboxyhexanoyl-CoA + AMP + diphosphate. The protein operates within metabolic intermediate metabolism; pimeloyl-CoA biosynthesis; pimeloyl-CoA from pimelate: step 1/1. Catalyzes the transformation of pimelate into pimeloyl-CoA with concomitant hydrolysis of ATP to AMP. This chain is 6-carboxyhexanoate--CoA ligase, found in Desulfovibrio desulfuricans (strain ATCC 27774 / DSM 6949 / MB).